The primary structure comprises 66 residues: UPF0370 protein YpfN (66 aa).

Residues 4–24 traverse the membrane as a helical segment; it reads LAKYWWILVLVFLVGVLLNVI. The tract at residues 39-66 is disordered; the sequence is KPELPPHRDFNDKWDDEDDWPKKDQPKK. Residues 42-51 are compositionally biased toward basic and acidic residues; that stretch reads LPPHRDFNDK.

It belongs to the UPF0370 family.

The protein localises to the cell membrane. The sequence is that of UPF0370 protein YpfN from Salmonella paratyphi C (strain RKS4594).